The primary structure comprises 167 residues: G/U mismatch-specific DNA glycosylase (167 aa).

Belongs to the uracil-DNA glycosylase (UDG) superfamily. TDG/mug family. In terms of assembly, binds DNA as a monomer.

It localises to the cytoplasm. The enzyme catalyses Specifically hydrolyzes mismatched double-stranded DNA and polynucleotides, releasing free uracil.. Excises ethenocytosine and uracil, which can arise by alkylation or deamination of cytosine, respectively, from the corresponding mispairs with guanine in ds-DNA. It is capable of hydrolyzing the carbon-nitrogen bond between the sugar-phosphate backbone of the DNA and the mispaired base. The complementary strand guanine functions in substrate recognition. Required for DNA damage lesion repair in stationary-phase cells. The polypeptide is G/U mismatch-specific DNA glycosylase (Pectobacterium atrosepticum (strain SCRI 1043 / ATCC BAA-672) (Erwinia carotovora subsp. atroseptica)).